Consider the following 355-residue polypeptide: Nuclear hormone receptor family member nhr-127 (355 aa).

The segment at residues 10 to 86 is a DNA-binding region (nuclear receptor); that stretch reads SIPCEVCKNQ…AGMKAEKIQK (77 aa). NR C4-type zinc fingers lie at residues 13-33 and 49-69; these read CEVCKNQSNGYHFEVLSCGAC and CKDGKKRCQIRYLDRHFCRYC. In terms of domain architecture, NR LBD spans 126 to 355; it reads NPHNASEGCS…IVQIVQNNFY (230 aa).

Belongs to the nuclear hormone receptor family.

Its subcellular location is the nucleus. Functionally, orphan nuclear receptor. May play a role in modulation of lifespan and immunity. In Caenorhabditis elegans, this protein is Nuclear hormone receptor family member nhr-127 (nhr-127).